A 235-amino-acid chain; its full sequence is Carboxy-S-adenosyl-L-methionine synthase (235 aa).

S-adenosyl-L-methionine is bound by residues Tyr-35, 60–62 (GCS), 84–85 (DN), 110–111 (DI), Asn-125, and Arg-192.

This sequence belongs to the class I-like SAM-binding methyltransferase superfamily. Cx-SAM synthase family. Homodimer.

The enzyme catalyses prephenate + S-adenosyl-L-methionine = carboxy-S-adenosyl-L-methionine + 3-phenylpyruvate + H2O. Catalyzes the conversion of S-adenosyl-L-methionine (SAM) to carboxy-S-adenosyl-L-methionine (Cx-SAM). This chain is Carboxy-S-adenosyl-L-methionine synthase, found in Sulfurimonas denitrificans (strain ATCC 33889 / DSM 1251) (Thiomicrospira denitrificans (strain ATCC 33889 / DSM 1251)).